A 598-amino-acid chain; its full sequence is tRNA(Met) cytidine acetyltransferase TmcA (598 aa).

ATP-binding positions include Gln-141, 163-172 (GRGKSTLAGK), and Arg-288. The N-acetyltransferase domain maps to 332-490 (TDLRRLFDAD…HSAMMLYPLS (159 aa)). Residues 411–413 (IAV), 418–424 (QNQGIGS), and Arg-462 each bind acetyl-CoA.

The protein belongs to the RNA cytidine acetyltransferase family. TmcA subfamily.

The protein localises to the cytoplasm. The catalysed reaction is cytidine(34) in elongator tRNA(Met) + acetyl-CoA + ATP + H2O = N(4)-acetylcytidine(34) in elongator tRNA(Met) + ADP + phosphate + CoA + H(+). Catalyzes the formation of N(4)-acetylcytidine (ac(4)C) at the wobble position of tRNA(Met), by using acetyl-CoA as an acetyl donor and ATP (or GTP). The polypeptide is tRNA(Met) cytidine acetyltransferase TmcA (Haemophilus ducreyi (strain 35000HP / ATCC 700724)).